The chain runs to 258 residues: F-box/SPRY domain-containing protein 1 (258 aa).

An F-box domain is found at 6 to 54 (MEYAPNIPDNVLELIFSFLKLQDLRNCTLVCKSWYRFFCDENNEVWRAQ). Residues 64-256 (FKNDLLTVVP…ISMVYLGAPL (193 aa)) enclose the B30.2/SPRY domain.

This sequence belongs to the FBXO45/Fsn family. Component of an E3 ubiquitin ligase complex composed of hiw and Fsn.

It is found in the synapse. Its pathway is protein modification; protein ubiquitination. Functionally, required in the presynaptic motoneuron to down-regulate the levels of wnd and restrain synaptic terminal growth at the neuromuscular junction (NMJ). The polypeptide is F-box/SPRY domain-containing protein 1 (Anopheles gambiae (African malaria mosquito)).